We begin with the raw amino-acid sequence, 391 residues long: 2-deoxy-scyllo-inosose synthase (391 aa).

Residues aspartate 42, glutamate 73 to lysine 76, glycine 105 to asparagine 109, threonine 129 to threonine 130, serine 140 to lysine 142, and lysine 151 to asparagine 152 each bind NAD(+). Lysine 142 is a catalytic residue. Glutamate 184 lines the Co(2+) pocket. The active site involves glutamate 244. Histidine 247 and histidine 263 together coordinate Co(2+).

Belongs to the sugar phosphate cyclases superfamily. DOI synthase family. Requires NAD(+) as cofactor. Co(2+) is required as a cofactor.

The enzyme catalyses D-glucose 6-phosphate = 2-deoxy-L-scyllo-inosose + phosphate. It functions in the pathway metabolic intermediate biosynthesis; 2-deoxystreptamine biosynthesis; 2-deoxystreptamine from D-glucose 6-phosphate: step 1/4. Its pathway is antibiotic biosynthesis; ribostamycin biosynthesis. Catalyzes the intramolecular carbocycle formation from D-glucose-6-phosphate to 2-deoxy-scyllo-inosose (DOI). The sequence is that of 2-deoxy-scyllo-inosose synthase (rbmA) from Streptomyces ribosidificus.